Here is a 361-residue protein sequence, read N- to C-terminus: Oxidoreductase lepF (361 aa).

Residues 257-277 (MLMLVLQAVLLPVFYVVAMPL) form a helical membrane-spanning segment.

It belongs to the NmrA-type oxidoreductase family.

The protein resides in the membrane. Oxidoreductase; part of the gene cluster 23 that mediates the biosynthesis of a family of 2-pyridones known as leporins. The hybrid PKS-NRPS synthetase lepA and the enoyl reductase lepG are responsible for fusion of phenylalanine with a hexaketide and subsequent release of the stable tetramic acid precursor, pre-leporin C. Because lepA lacks a designated enoylreductase (ER) domain, the required activity is provided the enoyl reductase lepG. It is possible that the dehydrogenase lepF also participates in production of pre-leporin C. Cytochrome P450 monooxygenase lepH is then required for the ring expansion step to yield leporin C. Leporin C is then presumably further oxidized by the N-hydroxylase lepD to form leporin B. LepI may possess a function in biosynthesis upstream of lepA. Leporin B is further oxidized in the presence of ferric ion to give the leporin B trimer-iron chelate, but whether or not this reaction is catalyzed by an enzyme in the pathway or by ferric ion is not determined yet. In Aspergillus flavus (strain ATCC 200026 / FGSC A1120 / IAM 13836 / NRRL 3357 / JCM 12722 / SRRC 167), this protein is Oxidoreductase lepF.